A 300-amino-acid polypeptide reads, in one-letter code: Ribosomal protein L11 methyltransferase (300 aa).

Residues T141, G164, D186, and N233 each contribute to the S-adenosyl-L-methionine site.

Belongs to the methyltransferase superfamily. PrmA family.

The protein localises to the cytoplasm. It catalyses the reaction L-lysyl-[protein] + 3 S-adenosyl-L-methionine = N(6),N(6),N(6)-trimethyl-L-lysyl-[protein] + 3 S-adenosyl-L-homocysteine + 3 H(+). In terms of biological role, methylates ribosomal protein L11. The sequence is that of Ribosomal protein L11 methyltransferase from Synechocystis sp. (strain ATCC 27184 / PCC 6803 / Kazusa).